The chain runs to 41 residues: Large ribosomal subunit protein bL36 (41 aa).

Belongs to the bacterial ribosomal protein bL36 family.

This chain is Large ribosomal subunit protein bL36, found in Rhodopseudomonas palustris (strain HaA2).